The chain runs to 2036 residues: Proline-rich protein 12 (2036 aa).

Disordered stretches follow at residues 210–283 (GGGV…RALP), 331–587 (CSPL…GAPG), and 649–697 (APSP…DPQR). Positions 223–240 (QTPPYRPGPPDPPPPPRH) are enriched in pro residues. Residues 249–258 (ASSSAAAAAA) are compositionally biased toward low complexity. 2 positions are modified to phosphoserine: S332 and S340. Residues 340-365 (SPGAGEPSKAGPSGATAGASGRATGP) are compositionally biased toward low complexity. 2 stretches are compositionally biased toward gly residues: residues 367–380 (AAGG…GGGY) and 391–400 (TGKGGYGAAA). Composition is skewed to low complexity over residues 411-432 (STAT…TGKA) and 441-458 (QAYS…QAYG). Positions 479–490 (PPQPPSGPPPPG) are enriched in pro residues. 2 stretches are compositionally biased toward polar residues: residues 493–504 (TCQSYSPDQLQG) and 523–537 (GLPT…STGH). Residues 543 to 558 (GHGGGWGPSSLGGGGE) show a composition bias toward gly residues. The residue at position 651 (S651) is a Phosphoserine. The span at 673 to 683 (GLGGSGGAGGP) shows a compositional bias: gly residues. T738 bears the Phosphothreonine mark. Disordered stretches follow at residues 758 to 850 (AFLQ…PLQL), 859 to 878 (LEPA…DPPG), 886 to 925 (ALEP…KAPR), and 952 to 1068 (EMFG…CSTK). Positions 802–817 (LPSVLSHAPSPSPSAS) are enriched in low complexity. Over residues 833–847 (PQPPPPPPPPPPPMP) the composition is skewed to pro residues. S865 bears the Phosphoserine mark. Residues 1037-1052 (AAPPPPPPPPPPPAPA) show a composition bias toward pro residues. Phosphoserine occurs at positions 1077 and 1135. 4 disordered regions span residues 1120-1260 (RLPD…SLTR), 1294-1347 (RHPP…GGAL), 1376-1573 (TLPS…GEGI), and 1668-1840 (HRPP…PGRL). Residues 1182–1194 (PTTAGPASASTPT) are compositionally biased toward low complexity. Basic residues predominate over residues 1199–1208 (KPRGRGRGRG). The span at 1209 to 1223 (RKAEEAGGTRLEPLK) shows a compositional bias: basic and acidic residues. K1223 carries the N6-acetyllysine modification. The segment covering 1239 to 1257 (GTSSGDAISGTDHNSLDSS) has biased composition (polar residues). T1304 bears the Phosphothreonine mark. Composition is skewed to pro residues over residues 1306-1317 (PLSPPKSVPPSV) and 1324-1338 (PQPP…PPPS). Phosphoserine is present on S1308. 3 positions are modified to phosphoserine: S1381, S1382, and S1387. Composition is skewed to pro residues over residues 1420 to 1438 (DGPP…PLPG) and 1458 to 1535 (PPTP…APSP). Residues 1541–1553 (PDTRPLHLAKKQE) are compositionally biased toward basic and acidic residues. A Phosphothreonine modification is found at T1561. A Phosphoserine modification is found at S1568. The segment covering 1691-1703 (APPPKAPAPPPKP) has biased composition (pro residues). 2 stretches are compositionally biased toward basic and acidic residues: residues 1704 to 1715 (ETPEKTTSEKPP) and 1737 to 1769 (PVEK…RPER). Phosphothreonine is present on T1705. A compositionally biased stretch (low complexity) spans 1817-1829 (GSSSDSESSPGAP). At S1925 the chain carries Phosphoserine.

The protein localises to the nucleus. It is found in the postsynaptic density. It localises to the synapse. The protein resides in the synaptosome. In Homo sapiens (Human), this protein is Proline-rich protein 12.